The following is a 325-amino-acid chain: GMP reductase (325 aa).

Catalysis depends on C173, which acts as the Thioimidate intermediate. 202 to 225 is a binding site for NADP(+); the sequence is IIADGGIRHHGDIAKSVRFGAAMV.

Belongs to the IMPDH/GMPR family. GuaC type 2 subfamily.

The catalysed reaction is IMP + NH4(+) + NADP(+) = GMP + NADPH + 2 H(+). In terms of biological role, catalyzes the irreversible NADPH-dependent deamination of GMP to IMP. It functions in the conversion of nucleobase, nucleoside and nucleotide derivatives of G to A nucleotides, and in maintaining the intracellular balance of A and G nucleotides. This chain is GMP reductase, found in Leptothrix cholodnii (strain ATCC 51168 / LMG 8142 / SP-6) (Leptothrix discophora (strain SP-6)).